The sequence spans 1048 residues: MSWLRTSPLRQSLTRNSGSSGSGNSSATTTLRQRPIDAATDCDPRACYDSFCKHWQQAHEIIQHPGPPTHDDVLGVVSHLDYMVTLLLVELHHCNKVSLPTADSAPPAAPCLEYLLSENLLDKLYEWASTTGRYANAVRLEQLKLYELLVSHSRHQLLCHEPFLRPLLKILASSQGEIFPPDLEKRLVILLNQLCVVLMQNVHLLDLFFFSAQTQVQEQIQNGSLAAPKSGTTTNFIIFSLLIPYVHREGSLGHQARDALLLCMALSQKNSNIGHYIAQYSSICPLLVTGLGGLYSRLPNSIEISSIDWHRITPDDVTEIPELTLFMNALEFCNAVVQVAHEMIKQQLLDFMYQGFIVPVLGPAILQTNIDSQISAMSYLDLILRSITEPGLMRAFVKFLLDTEKFDGERILDALVERLHSPDANLCMVTMALFDTLLGLHCEDLMLELLLKYLLPGKHVPISHRHKINKIDPYLNTTEFFLDLTPDVMKRARDLARPKSVQDQVDPAAATAPLAVMLPSLPSPVMSKTIGANWNYYGHYTGDSLYANVQAYLFEAHSRIAQCQRDCAKWANSYRYQKWPRQGQARANAHALELAKQFFSEFASAAPMAAAGTSDLGEKQLDSLQSIGESSGYESFKWRPADEDAEGIDVTTTTATSDTDLEHNNSSSIGSGRRDSWRISHSTRNELLLTDLDFSEDLFAQGTVSLGPFLNAIWSKLQTFTSNSLYVNLHLTGLITRLAWYPLPLIHSLLLRSDIAITSDTPSFHQVLRMLKQQIDAELPVAENSLEIIDVARSYLIDREFRLVNARKITDNAPMHQQHQQQQLQHTTNPTQQQQAQQRSTYATLSAATPVQASPTSAYDPFRRSDNKRRSISKSISSMFSRRSTSSTAATNTNTASSGLSQIYAFFTGAASTLVGGNNGEVSARGAAQEQSRGNTCETSLSTAPRQEAQTAVVSSSNSSIGGSTQTLSATHSSSTLHGVESGLQTGSFNSEPVSLDSVASMGIIANTSGTERSRDLALCAVLLDEWLKELAAIALEQSVVLVTEQLL.

Residues 1–15 show a composition bias toward polar residues; it reads MSWLRTSPLRQSLTR. The disordered stretch occupies residues 1–32; sequence MSWLRTSPLRQSLTRNSGSSGSGNSSATTTLR. Residues 16-26 show a composition bias toward low complexity; the sequence is NSGSSGSGNSS. A Phosphoserine modification is found at Ser-500. 3 disordered regions span residues 652–675, 813–871, and 924–984; these read TTTA…GRRD, APMH…KRRS, and ARGA…ESGL. Residues 816 to 838 show a composition bias toward low complexity; it reads HQQHQQQQLQHTTNPTQQQQAQQ. Polar residues-rich tracts occupy residues 839–857 and 929–954; these read RSTY…SPTS and QEQS…TAVV. Residues 955–978 show a composition bias toward low complexity; the sequence is SSSNSSIGGSTQTLSATHSSSTLH.

The protein belongs to the FHIP family.

The chain is FHIP family protein GJ17503 from Drosophila virilis (Fruit fly).